The following is a 154-amino-acid chain: Ribosomal RNA large subunit methyltransferase H (154 aa).

S-adenosyl-L-methionine is bound by residues G103 and 122–127; that span reads FSKLTF.

The protein belongs to the RNA methyltransferase RlmH family. In terms of assembly, homodimer.

Its subcellular location is the cytoplasm. It carries out the reaction pseudouridine(1915) in 23S rRNA + S-adenosyl-L-methionine = N(3)-methylpseudouridine(1915) in 23S rRNA + S-adenosyl-L-homocysteine + H(+). In terms of biological role, specifically methylates the pseudouridine at position 1915 (m3Psi1915) in 23S rRNA. The sequence is that of Ribosomal RNA large subunit methyltransferase H from Caldicellulosiruptor saccharolyticus (strain ATCC 43494 / DSM 8903 / Tp8T 6331).